A 238-amino-acid polypeptide reads, in one-letter code: Peroxisomal coenzyme A diphosphatase NUDT7 (238 aa).

Lys-20 is modified (N6-succinyllysine). A Nudix hydrolase domain is found at 37–172 (YNKYSVLLPL…VTRLGHRFIN (136 aa)). Residues 77–98 (KRDPTDMDDAATALREAQEEVG) carry the Nudix box motif. Glu-92 and Glu-96 together coordinate Mg(2+). Positions 236–238 (SRL) match the Microbody targeting signal motif.

It belongs to the Nudix hydrolase family. PCD1 subfamily. Monomer. It depends on Mn(2+) as a cofactor. Requires Mg(2+) as cofactor. In terms of tissue distribution, expressed in liver, kidney, pancreas, pituitary, small intestine, spleen, heart and placenta. Weakly expressed in brain.

It is found in the peroxisome. The enzyme catalyses hexanoyl-CoA + H2O = hexanoyl-4'-phosphopantetheine + adenosine 3',5'-bisphosphate + 2 H(+). The catalysed reaction is octanoyl-CoA + H2O = S-octanoyl-4'-phosphopantetheine + adenosine 3',5'-bisphosphate + 2 H(+). It catalyses the reaction butanoyl-CoA + H2O = S-butanoyl-4'-phosphopantetheine + adenosine 3',5'-bisphosphate + 2 H(+). It carries out the reaction decanoyl-CoA + H2O = decanoyl-4'-phosphopantetheine + adenosine 3',5'-bisphosphate + 2 H(+). The enzyme catalyses dodecanoyl-CoA + H2O = S-dodecanoyl-4'-phosphopantetheine + adenosine 3',5'-bisphosphate + 2 H(+). The catalysed reaction is tetradecanoyl-CoA + H2O = tetradecanoyl-4'-phosphopantetheine + adenosine 3',5'-bisphosphate + 2 H(+). It catalyses the reaction choloyl-CoA + H2O = S-choloyl-4'-phosphopantetheine + adenosine 3',5'-bisphosphate + 2 H(+). It carries out the reaction 3alpha,7alpha,12alpha-trihydroxy-5beta-cholestan-26-oyl-CoA + H2O = 3alpha,7alpha,12alpha-trihydroxy-5beta-cholestan-26-oyl-4'-phosphopantetheine + adenosine 3',5'-bisphosphate + 2 H(+). The enzyme catalyses acetyl-CoA + H2O = S-acetyl-4'-phosphopantetheine + adenosine 3',5'-bisphosphate + 2 H(+). The catalysed reaction is CoA + H2O = (R)-4'-phosphopantetheine + adenosine 3',5'-bisphosphate + 2 H(+). It catalyses the reaction propanoyl-CoA + H2O = propanoyl-4'-phosphopantetheine + adenosine 3',5'-bisphosphate + 2 H(+). It carries out the reaction malonyl-CoA + H2O = malonyl-4'-phosphopantetheine + adenosine 3',5'-bisphosphate + 2 H(+). The enzyme catalyses succinyl-CoA + H2O = succinyl-4'-phosphopantetheine + adenosine 3',5'-bisphosphate + 2 H(+). The catalysed reaction is a 5'-end CoA-ribonucleoside in mRNA + H2O = a 5'-end phospho-adenosine-phospho-ribonucleoside in mRNA + (R)-4'-phosphopantetheine + 2 H(+). Inhibited by fluoride. In terms of biological role, fatty acyl-coenzyme A (CoA) diphosphatase that hydrolyzes fatty acyl-CoA to yield acyl-4'-phosphopantetheine and adenosine 3',5'-bisphosphate. Cleaves CoA, CoA esters and oxidized CoA with similar efficiencies. Preferentially hydrolyzes medium-chain acyl-CoAs and bile acid-CoAs. Has no activity toward NDP-sugars, CDP-alcohols, (deoxy)nucleoside 5'-triphosphates, nucleoside 5'-di or monophosphates, diadenosine polyphosphates, NAD, NADH, NADP, NADPH or thymidine-5'-monophospho-p-nitrophenyl ester. May be required to eliminate oxidized CoA from peroxisomes, or regulate CoA and acyl-CoA levels in this organelle in response to metabolic demand. Does not play a role in U8 snoRNA decapping activity. Binds U8 snoRNA. Exhibits decapping activity towards dpCoA-capped RNAs in vitro. This Homo sapiens (Human) protein is Peroxisomal coenzyme A diphosphatase NUDT7.